The following is a 335-amino-acid chain: DNA-directed RNA polymerase subunit alpha (335 aa).

The alpha N-terminal domain (alpha-NTD) stretch occupies residues M1–K231. An alpha C-terminal domain (alpha-CTD) region spans residues K263–F335.

The protein belongs to the RNA polymerase alpha chain family. As to quaternary structure, in plastids the minimal PEP RNA polymerase catalytic core is composed of four subunits: alpha, beta, beta', and beta''. When a (nuclear-encoded) sigma factor is associated with the core the holoenzyme is formed, which can initiate transcription.

Its subcellular location is the plastid. The protein resides in the chloroplast. The catalysed reaction is RNA(n) + a ribonucleoside 5'-triphosphate = RNA(n+1) + diphosphate. In terms of biological role, DNA-dependent RNA polymerase catalyzes the transcription of DNA into RNA using the four ribonucleoside triphosphates as substrates. In Lactuca sativa (Garden lettuce), this protein is DNA-directed RNA polymerase subunit alpha.